The following is a 142-amino-acid chain: Large ribosomal subunit protein uL11 (142 aa).

The protein belongs to the universal ribosomal protein uL11 family. As to quaternary structure, part of the ribosomal stalk of the 50S ribosomal subunit. Interacts with L10 and the large rRNA to form the base of the stalk. L10 forms an elongated spine to which L12 dimers bind in a sequential fashion forming a multimeric L10(L12)X complex. Post-translationally, one or more lysine residues are methylated.

In terms of biological role, forms part of the ribosomal stalk which helps the ribosome interact with GTP-bound translation factors. The polypeptide is Large ribosomal subunit protein uL11 (Vibrio vulnificus (strain CMCP6)).